A 668-amino-acid polypeptide reads, in one-letter code: Golgin candidate 2 (668 aa).

Residues 22-317 (QAADSLRKDE…RQREERRRRR (296 aa)) are disordered. Basic and acidic residues predominate over residues 26–39 (SLRKDEKSETHDEV). Polar residues-rich tracts occupy residues 64 to 86 (GSDS…LSSS) and 100 to 113 (SAPS…NTKL). 2 stretches are compositionally biased toward low complexity: residues 123 to 141 (STPN…GGTS) and 168 to 178 (SSSSNVVNSRG). Basic and acidic residues-rich tracts occupy residues 184 to 207 (TNKE…RNAP), 215 to 237 (THKE…RRSA), and 250 to 259 (GKRDGRESRR). Acidic residues predominate over residues 290 to 302 (DESESDYESDSST). The span at 303-312 (DSERERQREE) shows a compositional bias: basic and acidic residues. Positions 331–539 (AVIKERENMV…SQVEALSSEK (209 aa)) form a coiled coil. Helical transmembrane passes span 594 to 614 (KHLG…TVFL) and 622 to 642 (IWAV…LLSH).

The protein resides in the golgi apparatus membrane. Functionally, golgi matrix protein playing a role in tethering of vesicles to Golgi membranes and in maintaining the overall structure of the Golgi apparatus. The protein is Golgin candidate 2 (GC2) of Arabidopsis thaliana (Mouse-ear cress).